Consider the following 351-residue polypeptide: Cyanuric acid amidohydrolase (351 aa).

Residues 1-96 form an RU A region; that stretch reads MPSLRAHVFR…HWTVFARETV (96 aa). Substrate-binding positions include arginine 53 and 77 to 78; that span reads SG. The segment at 103-240 is RU B; it reads ALAIGVSRTP…HEIIVLGMSA (138 aa). Residue lysine 153 is part of the active site. Substrate contacts are provided by residues arginine 185 and 223 to 224; that span reads SS. Serine 223 acts as the Nucleophile in catalysis. The RU C stretch occupies residues 246-351; it reads LSIDHAVMLD…PVAIIVEKEQ (106 aa). Glutamate 283 provides a ligand contact to Mg(2+). Substrate contacts are provided by residues arginine 310 and 329–330; that span reads SG. Mg(2+) is bound by residues alanine 332, glutamine 335, glycine 336, proline 337, and glycine 340.

It belongs to the cyclic amide hydrolase (CyAH) family. Homotetramer.

It catalyses the reaction cyanurate + H2O = 1-carboxybiuret + H(+). It functions in the pathway xenobiotic degradation; atrazine degradation; biuret from cyanurate: step 1/1. Inhibited by barbituric acid. In terms of biological role, responsible for the hydrolysis of cyanuric acid, an intermediate formed during catabolism of s-triazine based compounds in herbicides such as atrazine and polymers such as melamine. Catalyzes the hydrolytic opening of the s-triazine ring of cyanuric acid (2,4,6-trihydroxy-s-triazine) to yield carbon dioxide and carboxybiuret, which spontaneously decarboxylates to biuret. The chain is Cyanuric acid amidohydrolase from Rhizobium leguminosarum bv. trifolii (strain WSM1325).